We begin with the raw amino-acid sequence, 461 residues long: MAPVVISESEEDEDRVAITRRTKRQVHFDGEGDDRVDQQQQQHSSSHRDRDKHVQRKKKKRLSNRNLQGSNGGYAWEDEIKRSWDLVKVDDEGDMASLVASIVEARKKRTAKKNITPYQRGIIRSLILTLDCSEAMLEKDLRPNRHAMIIQYAIDFVHEFFDQNPISQMGIIIMRNGLAQLVSQVSGNPQDHIDALKSIRKQEPKGNPSLQNALEMARGLLLPVPAHCTREVLIVFGSLSTTDPGDIHQTIDSLVSEKIRVKVLGLSAQVAICKELCKATNYGDESFYKILLDETHLKELFNEAVTPLPVNKINKGFTLVKMGFPTRIFEDTPTFCSCHSKLVYGGYFCPNCHSKVCSLPTVCPCCDLMLILSTHLARSYHHLMPLKTFAEVPTTEKFRSEDCFSCQSRFPILKNHKNGKLLTSSRYRCEDCKQEFCVDCDVFIHEILHNCPGCESKPVIT.

The interval 1–70 is disordered; it reads MAPVVISESE…RLSNRNLQGS (70 aa). A compositionally biased stretch (basic and acidic residues) spans 26-37; sequence VHFDGEGDDRVD. Residues 53–63 show a composition bias toward basic residues; that stretch reads HVQRKKKKRLS. Residues 125–304 form the VWFA domain; it reads SLILTLDCSE…THLKELFNEA (180 aa). A C4-type zinc finger spans residues 349-366; it reads CPNCHSKVCSLPTVCPCC.

It belongs to the GTF2H2 family. Component of the 7-subunit TFIIH core complex composed of XPB/SSL2, XPD/RAD3, SSL1, TFB1, TFB2, TFB4 and TFB5, which is active in NER. The core complex associates with the 3-subunit CTD-kinase module TFIIK composed of CCL1, KIN28 and TFB3 to form the 10-subunit holoenzyme (holo-TFIIH) active in transcription. An additionnal subunit, TFB6, plays a role in the dissociation of the SSL2 helicase from TFIIH after transcription initiation.

The protein resides in the nucleus. Functionally, component of the general transcription and DNA repair factor IIH (TFIIH) core complex, which is involved in general and transcription-coupled nucleotide excision repair (NER) of damaged DNA and, when complexed to TFIIK, in RNA transcription by RNA polymerase II. In NER, TFIIH acts by opening DNA around the lesion to allow the excision of the damaged oligonucleotide and its replacement by a new DNA fragment. In transcription, TFIIH has an essential role in transcription initiation. When the pre-initiation complex (PIC) has been established, TFIIH is required for promoter opening and promoter escape. Phosphorylation of the C-terminal tail (CTD) of the largest subunit of RNA polymerase II by the kinase module TFIIK controls the initiation of transcription. In Saccharomyces cerevisiae (strain ATCC 204508 / S288c) (Baker's yeast), this protein is General transcription and DNA repair factor IIH subunit SSL1 (SSL1).